The following is a 184-amino-acid chain: Endoribonuclease YbeY (184 aa).

Zn(2+) contacts are provided by histidine 118, histidine 122, and histidine 128.

The protein belongs to the endoribonuclease YbeY family. Zn(2+) serves as cofactor.

The protein resides in the cytoplasm. Single strand-specific metallo-endoribonuclease involved in late-stage 70S ribosome quality control and in maturation of the 3' terminus of the 16S rRNA. This chain is Endoribonuclease YbeY, found in Nocardia farcinica (strain IFM 10152).